The primary structure comprises 976 residues: Probable alanine--tRNA ligase, chloroplastic/mitochondrial (976 aa).

The N-terminal 54 residues, 1–54, are a transit peptide targeting the chloroplast and mitochondrion; the sequence is MPRPGFAHATAPALAHARARISPVARRRVVVMRTRVDGAAKSLVTQLRLALGST. The interval 71 to 95 is disordered; it reads LGTATNDQSTGTRANPNAEGKDNSG. A compositionally biased stretch (polar residues) spans 73-85; the sequence is TATNDQSTGTRAN.

Belongs to the class-II aminoacyl-tRNA synthetase family. As to quaternary structure, monomer. Zn(2+) is required as a cofactor.

Its subcellular location is the plastid. It localises to the chloroplast. The protein resides in the mitochondrion. The catalysed reaction is tRNA(Ala) + L-alanine + ATP = L-alanyl-tRNA(Ala) + AMP + diphosphate. Its function is as follows. Catalyzes the attachment of alanine to tRNA(Ala) in a two-step reaction: alanine is first activated by ATP to form Ala-AMP and then transferred to the acceptor end of tRNA(Ala). Also edits incorrectly charged tRNA(Ala) via its editing domain. This Ostreococcus tauri protein is Probable alanine--tRNA ligase, chloroplastic/mitochondrial.